Reading from the N-terminus, the 284-residue chain is Pantothenate synthetase (284 aa).

Residue 34 to 41 (MGALHAGH) coordinates ATP. H41 serves as the catalytic Proton donor. Residue Q65 coordinates (R)-pantoate. A beta-alanine-binding site is contributed by Q65. Residue 151 to 154 (GEKD) coordinates ATP. (R)-pantoate is bound at residue Q157. ATP-binding positions include L180 and 188-191 (MSSR).

The protein belongs to the pantothenate synthetase family. In terms of assembly, homodimer.

The protein resides in the cytoplasm. The enzyme catalyses (R)-pantoate + beta-alanine + ATP = (R)-pantothenate + AMP + diphosphate + H(+). It participates in cofactor biosynthesis; (R)-pantothenate biosynthesis; (R)-pantothenate from (R)-pantoate and beta-alanine: step 1/1. Its function is as follows. Catalyzes the condensation of pantoate with beta-alanine in an ATP-dependent reaction via a pantoyl-adenylate intermediate. The polypeptide is Pantothenate synthetase (Paramagnetospirillum magneticum (strain ATCC 700264 / AMB-1) (Magnetospirillum magneticum)).